The following is a 118-amino-acid chain: Small ribosomal subunit protein uS13 (118 aa).

The interval 94-118 (SLPLRGQRTKTNARTRKGPRKAIKK) is disordered.

This sequence belongs to the universal ribosomal protein uS13 family. In terms of assembly, part of the 30S ribosomal subunit. Forms a loose heterodimer with protein S19. Forms two bridges to the 50S subunit in the 70S ribosome.

Its function is as follows. Located at the top of the head of the 30S subunit, it contacts several helices of the 16S rRNA. In the 70S ribosome it contacts the 23S rRNA (bridge B1a) and protein L5 of the 50S subunit (bridge B1b), connecting the 2 subunits; these bridges are implicated in subunit movement. Contacts the tRNAs in the A and P-sites. The chain is Small ribosomal subunit protein uS13 from Pseudoalteromonas atlantica (strain T6c / ATCC BAA-1087).